Here is a 126-residue protein sequence, read N- to C-terminus: MLPEPSRLRRHADFSVAVRRGRRMGRRDLVVHAFDREQVEALVVTNHGPRFGLIVSKAVGPAVIRHRVARRLRHICADFVGQVSPETDVVIRALPGAATASSAELAKQLRGGLTKMNLLVSVSEEP.

This sequence belongs to the RnpA family. Consists of a catalytic RNA component (M1 or rnpB) and a protein subunit.

The catalysed reaction is Endonucleolytic cleavage of RNA, removing 5'-extranucleotides from tRNA precursor.. Functionally, RNaseP catalyzes the removal of the 5'-leader sequence from pre-tRNA to produce the mature 5'-terminus. It can also cleave other RNA substrates such as 4.5S RNA. The protein component plays an auxiliary but essential role in vivo by binding to the 5'-leader sequence and broadening the substrate specificity of the ribozyme. The polypeptide is Ribonuclease P protein component (Rhodococcus erythropolis (strain PR4 / NBRC 100887)).